We begin with the raw amino-acid sequence, 895 residues long: Pyruvate dehydrogenase E1 component (895 aa).

Residues 1–20 are disordered; sequence MSAVPEQILGASSANDADPQ.

In terms of assembly, homodimer. Part of the PDH complex, consisting of multiple copies of pyruvate dehydrogenase (E1), dihydrolipoamide acetyltransferase (E2) and lipoamide dehydrogenase (E3). It depends on thiamine diphosphate as a cofactor.

The catalysed reaction is N(6)-[(R)-lipoyl]-L-lysyl-[protein] + pyruvate + H(+) = N(6)-[(R)-S(8)-acetyldihydrolipoyl]-L-lysyl-[protein] + CO2. Its function is as follows. Component of the pyruvate dehydrogenase (PDH) complex, that catalyzes the overall conversion of pyruvate to acetyl-CoA and CO(2). This is Pyruvate dehydrogenase E1 component (pdhA) from Cupriavidus necator (strain ATCC 17699 / DSM 428 / KCTC 22496 / NCIMB 10442 / H16 / Stanier 337) (Ralstonia eutropha).